Here is a 600-residue protein sequence, read N- to C-terminus: Methionine--tRNA ligase (600 aa).

The 'HIGH' region motif lies at 11–21 (PYANGPRHIGH). Residues Cys143, Cys146, Cys156, and Cys159 each coordinate Zn(2+). The 'KMSKS' region signature appears at 351–355 (KFSSS). Ser354 provides a ligand contact to ATP.

The protein belongs to the class-I aminoacyl-tRNA synthetase family. MetG type 1 subfamily. In terms of assembly, monomer. Requires Zn(2+) as cofactor.

It is found in the cytoplasm. It catalyses the reaction tRNA(Met) + L-methionine + ATP = L-methionyl-tRNA(Met) + AMP + diphosphate. Is required not only for elongation of protein synthesis but also for the initiation of all mRNA translation through initiator tRNA(fMet) aminoacylation. This Salinispora arenicola (strain CNS-205) protein is Methionine--tRNA ligase.